A 350-amino-acid polypeptide reads, in one-letter code: Heat-inducible transcription repressor HrcA (350 aa).

The protein belongs to the HrcA family.

In terms of biological role, negative regulator of class I heat shock genes (grpE-dnaK-dnaJ and groELS operons). Prevents heat-shock induction of these operons. The protein is Heat-inducible transcription repressor HrcA of Ligilactobacillus salivarius (strain UCC118) (Lactobacillus salivarius).